Reading from the N-terminus, the 1300-residue chain is CRISPR-associated endonuclease Cas12a (1300 aa).

A wedge region 1 region spans residues 1–24 (MSIYQEFVNKYSLSKTLRFELIPQ). Recognition domain stretches follow at residues 25–339 (GKTL…SFVI) and 340–591 (DKLE…QKPY). Binds crRNA alone and in crRNA-target DNA heteroduplex stretches follow at residues 47-51 (YKKAK) and 182-186 (FHENR). Residues 301–305 (NEYIN) form a binds DNA in crRNA-target DNA heteroduplex region. Binds crRNA in crRNA-target DNA heteroduplex stretches follow at residues 326-329 (KQIL) and 538-541 (HKLK). The binds crRNA stretch occupies residues 591–595 (YSDEK). The wedge region 2 stretch occupies residues 592–662 (SDEKFKLNFE…GYKKIVYKLL (71 aa)). An LKL, important for PAM recognition and DNA unwinding region spans residues 662–679 (LPGANKMLPKVFFSAKSI). A PAM-interacting domain (PI) region spans residues 663-762 (PGANKMLPKV…FYREVENQGY (100 aa)). Positions 671–677 (KVFFSAK) are binds DNA protospacer adjacent motif (PAM) on target DNA. The interval 692–704 (RNHSTHTKNGSPQ) is binds single-strand non-target DNA. Positions 763-892 (KLTFENISES…PITINFKSSG (130 aa)) are wedge region 3. Binds crRNA regions lie at residues 791–794 (KDFS) and 803–804 (LH). Catalysis depends on for pre-crRNA processing residues histidine 843, lysine 852, and lysine 869. Binds crRNA stretches follow at residues 851–853 (NKN) and 865–873 (YDLIKDKRF). Positions 893-953 (ANKFNDEINL…IGNDRMKTNY (61 aa)) are ruvC-I. Aspartate 917 acts as the For DNase activity of RuvC domain in catalysis. The segment at 954–971 (HDKLAAIEKDRDSARKDW) is bridge helix. The tract at residues 972 to 1078 (KKINNIKEMK…KQTGIIYYVP (107 aa)) is ruvC-II. The active-site For DNase activity of RuvC domain is glutamate 1006. Residues 1079–1254 (AGFTSKICPV…QAPKNMPQDA (176 aa)) form a nuclease domain region. The active-site For DNase activity of RuvC domain is aspartate 1255. Residues 1255–1300 (DANGAYHIGLKGLMLLGRIKNNQEGKKLNLVIKNEEYFEFVQNRNN) are ruvC-III.

The protein belongs to the CRISPR-associated endonuclease Cas12a family. As to quaternary structure, might be a homodimer. Might be a monomer. The cofactor is Ca(2+). Mg(2+) serves as cofactor.

The enzyme catalyses Endonucleolytic cleavage to 5'-phosphodinucleotide and 5'-phosphooligonucleotide end-products.. The catalysed reaction is RNA = a 5'-hydroxy-ribonucleotide + n nucleoside-2',3'-cyclophosphates.. Functionally, CRISPR (clustered regularly interspaced short palindromic repeat), is an adaptive immune system that provides protection against mobile genetic elements (viruses, transposable elements and conjugative plasmids). CRISPR clusters contain sequences complementary to antecedent mobile elements and target invading nucleic acids. CRISPR clusters are transcribed and processed into CRISPR RNA (crRNA). Has endonuclease activity on pre-crRNA and dsDNA, using different active sites. A single-RNA guided endonuclease that is also capable of guiding crRNA processing; correct processing of pre-crRNA requires only this protein and the CRISPR locus. pre-crRNA processing proceeds by an intramolecular nucleophilic attack on the scissile phosphate by the 2'-OH of the upstream ribonucleotide, the divalent cation (which is bound by the crRNA) is probably required for ordering the crRNA pseudoknot and/or increasing RNA binding. RNA mutagenesis studies show pre-crRNA cleavage is highly sequence- and structure-specific. Forms a complex with crRNA and complementary dsDNA, where the crRNA displaces the non-target DNA strand and directs endonucleolytic cleavage of both strands of the DNA. Cleavage results in staggered 5-base 5' overhangs 14-18 and 21-23 bases downstream of the PAM (protospacer adjacent motif) on the non-target and target strands respectively. Both target and non-target strand DNA are probably independently cleaved in the same active site. When this protein is expressed in E.coli it prevents plasmids homologous to the first CRISPR spacer from transforming, formally showing it is responsible for plasmid immunity. This chain is CRISPR-associated endonuclease Cas12a, found in Francisella tularensis subsp. novicida (strain U112).